Reading from the N-terminus, the 317-residue chain is Succinate receptor 1 (317 aa).

Over methionine 1–serine 23 the chain is Extracellular. Residue asparagine 4 is glycosylated (N-linked (GlcNAc...) asparagine). Residues alanine 24–cysteine 47 form a helical membrane-spanning segment. At methionine 48–asparagine 55 the chain is on the cytoplasmic side. A helical transmembrane segment spans residues valine 56 to isoleucine 76. Topologically, residues lysine 77–asparagine 101 are extracellular. Residues cysteine 91 and cysteine 168 are joined by a disulfide bond. Residues leucine 102 to leucine 119 traverse the membrane as a helical segment. Over methionine 120–glutamate 133 the chain is Cytoplasmic. The chain crosses the membrane as a helical span at residues phenylalanine 134–isoleucine 157. Residues asparagine 158 to asparagine 180 are Extracellular-facing. A helical membrane pass occupies residues leucine 181–tyrosine 204. Over lysine 205–arginine 228 the chain is Cytoplasmic. A helical membrane pass occupies residues leucine 229 to isoleucine 246. Topologically, residues methionine 247–proline 277 are extracellular. The helical transmembrane segment at leucine 278–glycine 294 threads the bilayer. Residues aspartate 295–threonine 317 lie on the Cytoplasmic side of the membrane.

It belongs to the G-protein coupled receptor 1 family. In terms of tissue distribution, predominantly expressed in the kidney (proximal and distal tubules and the juxtaglomerular apparatus). Weakly expressed in liver, spleen and small intestine. Highly expressed in immature dendritic cells, expression rapidly downregulates after maturation. Also expressed in macrophages. Specifically expressed in intestinal tuft cells. Expression in whole muscle is attributable to major non-myofibrillar resident cell types, including stromal, endothelial and satellite cell populations.

It localises to the cell membrane. G protein-coupled receptor for succinate able to mediate signaling through Gq/GNAQ or Gi/GNAI second messengers depending on the cell type and the processes regulated. Succinate-SUCNR1 signaling serves as a link between metabolic stress, inflammation and energy homeostasis. In macrophages, plays a range of immune-regulatory roles. During inflammation, succinate-SUCNR1 signaling may act as an anti-inflammatory mediator or boost inflammation depending on the inflammatory status of cells. Hyperpolarizes M2 macrophages versus M1 phenotype through Gq signaling by regulating the transcription of genes involved in immune function. In activated M1 macrophages, plays a pro-inflammatory role in response to LPS. Expressed in dendritic cells, where it is involved in the sensing of immunological danger and enhances immunity. Mediates succinate triggered intracelleular calcium mobilization, induces migratory responses and acts in synergy with Toll-like receptor ligands for the production of proinflammatory cytokines as well as an enhancement of antigen-specific activation of helper T cells. In the small intestine, mediates the activation of tuft cells by dietary succinate and triggers type 2 immunity. In adipocytes, plays an important role in the control of energy metabolism. In response to succinate, controls leptin expression in an AMPK-JNK-CEBPA-dependent as well as circadian clock-regulated manner. In muscle tissue, is expressed in non-muscle cells and coordinates muscle remodeling in response to the succinate produced during exercise training in a paracrine manner. In retina, acts as a mediator of vessel growth during retinal development. In response to succinate, regulates the production of angiogenic factors, including VEGF, by retinal ganglion neurons. In Mus musculus (Mouse), this protein is Succinate receptor 1 (Sucnr1).